The chain runs to 102 residues: Ferredoxin-thioredoxin reductase, catalytic chain (102 aa).

Cysteine 53 provides a ligand contact to [4Fe-4S] cluster. Residue cysteine 55 is the Nucleophile of the active site. Cysteine 55 and cysteine 85 are joined by a disulfide. Positions 72, 74, and 83 each coordinate [4Fe-4S] cluster.

The protein belongs to the ferredoxin thioredoxin reductase beta subunit family. Heterodimer of subunit A (variable subunit) and subunit B (catalytic subunit). Heterodimeric FTR forms a complex with ferredoxin and thioredoxin. The cofactor is [4Fe-4S] cluster.

The protein localises to the plastid. It is found in the chloroplast. It catalyses the reaction [thioredoxin]-disulfide + 2 reduced [2Fe-2S]-[ferredoxin] + 2 H(+) = [thioredoxin]-dithiol + 2 oxidized [2Fe-2S]-[ferredoxin]. In terms of biological role, catalytic subunit of the ferredoxin-thioredoxin reductase (FTR), which catalyzes the two-electron reduction of thioredoxins by the electrons provided by reduced ferredoxin. This chain is Ferredoxin-thioredoxin reductase, catalytic chain (ftrB), found in Guillardia theta (Cryptophyte).